Consider the following 556-residue polypeptide: Single-strand DNA-binding protein (556 aa).

Disordered stretches follow at residues 1–95 (MDPK…SEVE) and 527–556 (FVRPEPALPPISDSRRTYESRPRGPTVNSL). Composition is skewed to polar residues over residues 10-25 (ENITETAAGNVETSDF) and 36-51 (VNSTGMSEIDMTGSQE). Basic and acidic residues-rich tracts occupy residues 52-73 (TPEHNMHGSPTHTDDLGPRLDA) and 539-548 (DSRRTYESRP).

In terms of assembly, interacts with host VIP2 that promotes T-DNA integration into the host genome. Forms a complex made of virE2 and host proteins VIP1 and VBF. Forms heterodimers with the chaperone protein virE1 that prevent virE2 anarchic homopolymerization. Interacts with A.thaliana VIP1 that mediates its translocation to the host nucleus. Forms a complex made of VirE2, host VIP1 and VIP2 and single-stranded DNA (ssDNA).

It is found in the secreted. Its subcellular location is the host nucleus. Involved in DNA transformation; mediates the nuclear uptake of single-stranded DNA copies of the transferred DNA (T-DNA) element. Binds single-stranded but not double-stranded DNA regardless of nucleotide sequence composition. This Agrobacterium fabrum (strain C58 / ATCC 33970) (Agrobacterium tumefaciens (strain C58)) protein is Single-strand DNA-binding protein (virE2).